Consider the following 485-residue polypeptide: D-alanine--D-alanyl carrier protein ligase (485 aa).

Position 144–145 (144–145 (TS)) interacts with ATP. Asp-189 contacts D-alanine. 284-289 (NTYGPT) is a binding site for ATP. Position 293 (Val-293) interacts with D-alanine. The ATP site is built by Asp-365 and Lys-473. Lys-473 serves as a coordination point for D-alanine.

It belongs to the ATP-dependent AMP-binding enzyme family. DltA subfamily.

It localises to the cytoplasm. The enzyme catalyses holo-[D-alanyl-carrier protein] + D-alanine + ATP = D-alanyl-[D-alanyl-carrier protein] + AMP + diphosphate. The protein operates within cell wall biogenesis; lipoteichoic acid biosynthesis. In terms of biological role, catalyzes the first step in the D-alanylation of lipoteichoic acid (LTA), the activation of D-alanine and its transfer onto the D-alanyl carrier protein (Dcp) DltC. In an ATP-dependent two-step reaction, forms a high energy D-alanyl-AMP intermediate, followed by transfer of the D-alanyl residue as a thiol ester to the phosphopantheinyl prosthetic group of the Dcp. D-alanylation of LTA plays an important role in modulating the properties of the cell wall in Gram-positive bacteria, influencing the net charge of the cell wall. The chain is D-alanine--D-alanyl carrier protein ligase from Staphylococcus aureus (strain bovine RF122 / ET3-1).